Consider the following 295-residue polypeptide: Cyclic dipyrimidine nucleotide synthase CdnE (295 aa).

Residues 1 to 25 form a disordered region; that stretch reads MSIDWEQTFRKWSKPSSETESTKAE. UTP contacts are provided by glutamine 51, serine 53, and asparagine 59. Aspartate 65 and aspartate 67 together coordinate Mg(2+). 3 residues coordinate UTP: aspartate 67, aspartate 124, and lysine 125. Mg(2+) contacts are provided by aspartate 128 and aspartate 139. Positions 139, 173, 201, and 220 each coordinate UTP. A Pyrimidine specificity motif (R/Q)xW in donor pocket motif is present at residues 274-276; that stretch reads QMW.

It belongs to the CD-NTase family. E02 subfamily. Requires Mg(2+) as cofactor.

The enzyme catalyses 2 UTP = c-di-UMP + 2 diphosphate. The catalysed reaction is UTP + CTP = cyclic CMP-UMP + 2 diphosphate. In terms of biological role, cyclic nucleotide synthase (second messenger synthase) of a CBASS antivirus system. CBASS (cyclic oligonucleotide-based antiphage signaling system) provides immunity against bacteriophage. The CD-NTase protein synthesizes cyclic nucleotides in response to infection; these serve as specific second messenger signals. The signals activate a diverse range of effectors, leading to bacterial cell death and thus abortive phage infection. A type I-B(UU) CBASS system. Cyclic dinucleotide synthase that catalyzes the synthesis of 3',3'-cyclic UMP-UMP (c-di-UMP) as the major product, and of 3',3'-cyclic CMP-UMP as a minor product, which are second messengers for cell signal transduction. This is Cyclic dipyrimidine nucleotide synthase CdnE from Legionella pneumophila.